The chain runs to 623 residues: Procollagen galactosyltransferase 1 (623 aa).

Positions 1–30 (MAAAPRACKGHGRPLPVLLLLLLLALPPLG) are cleaved as a signal peptide. Residues asparagine 97, asparagine 185, and asparagine 382 are each glycosylated (N-linked (GlcNAc...) asparagine). Residues 589–607 (RAKSQKMREQQALSREAKN) show a composition bias toward basic and acidic residues. The segment at 589–623 (RAKSQKMREQQALSREAKNSDVLQSPLDSAARDEL) is disordered. A Prevents secretion from ER motif is present at residues 620–623 (RDEL).

The protein belongs to the glycosyltransferase 25 family. In terms of processing, N-glycosylated.

Its subcellular location is the endoplasmic reticulum lumen. It carries out the reaction (5R)-5-hydroxy-L-lysyl-[collagen] + UDP-alpha-D-galactose = (5R)-5-O-(beta-D-galactosyl)-5-hydroxy-L-lysyl-[collagen] + UDP + H(+). Its function is as follows. Beta-galactosyltransferase that transfers beta-galactose to hydroxylysine residues of type I collagen. By acting on collagen glycosylation, facilitates the formation of collagen triple helix. Also involved in the biosynthesis of collagen type IV. The chain is Procollagen galactosyltransferase 1 (COLGALT1) from Bos taurus (Bovine).